The chain runs to 424 residues: Protein maelstrom 1 (424 aa).

The segment at residues Pro2–Asn69 is a DNA-binding region (HMG box).

Belongs to the maelstrom family.

It is found in the cytoplasm. Its subcellular location is the nucleus. Involved both in the piRNA and miRNA metabolic processes. As a component of the meiotic nuage, plays a central role during oogenesis by repressing transposable elements and preventing their mobilization, which is essential for the germline integrity. Repression of transposable elements is mediated via the piRNA metabolic process, which mediates the repression of transposable elements during meiosis by forming complexes composed of piRNAs and Piwi proteins and governs the repression of transposons. As a nuclear component, it is required for proper differentiation in the germline stem cell (GSC) lineage by repressing microRNA-7 (miR-7), thereby acting as an indirect regulator of bag-of-marbles (Bam). Acts by binding to the promoter of miR-7 gene and repressing its expression; miR-7 repression alleviates the Bam repression by miR-7, thereby allowing differentiation in the germline stem cell (GSC) lineage. This Drosophila ananassae (Fruit fly) protein is Protein maelstrom 1 (mael1).